We begin with the raw amino-acid sequence, 402 residues long: Bacteriochlorophyllide c C-7(1)-hydroxylase (402 aa).

The 256-residue stretch at 104–359 folds into the Radical SAM core domain; sequence VIGMNQDIIN…IKYQDRFDMP (256 aa). [4Fe-4S] cluster-binding residues include cysteine 120, cysteine 129, and cysteine 132.

It belongs to the radical SAM superfamily. It depends on [4Fe-4S] cluster as a cofactor.

It catalyses the reaction a bacteriochlorophyllide c + 2 S-adenosyl-L-methionine + H2O = a bacteriochlorophyllide e + 2 5'-deoxyadenosine + 2 L-methionine + 2 H(+). The catalysed reaction is a bacteriochlorophyllide d + 2 S-adenosyl-L-methionine + H2O = a bacteriochlorophyllide f + 2 5'-deoxyadenosine + 2 L-methionine + 2 H(+). It participates in porphyrin-containing compound metabolism; bacteriochlorophyll biosynthesis. Involved in the biosynthesis of bacteriochlorophyll e (BChl e). Catalyzes two consecutive hydroxylation reactions of the C-7 methyl group of bacteriochlorophyllide c (BChlide c) to form a geminal diol intermediate that spontaneously dehydrates to produce the formyl group of bacteriochlorophyllide e (BChlide e). Also able to catalyze the same reaction for bacteriochlorophyllide d (BChlide d) to give rise to bacteriochlorophyllide f (BChlide f). This chain is Bacteriochlorophyllide c C-7(1)-hydroxylase, found in Chlorobaculum limnaeum.